A 418-amino-acid polypeptide reads, in one-letter code: Gamma-glutamyl phosphate reductase (418 aa).

The protein belongs to the gamma-glutamyl phosphate reductase family.

It is found in the cytoplasm. The catalysed reaction is L-glutamate 5-semialdehyde + phosphate + NADP(+) = L-glutamyl 5-phosphate + NADPH + H(+). Its pathway is amino-acid biosynthesis; L-proline biosynthesis; L-glutamate 5-semialdehyde from L-glutamate: step 2/2. Catalyzes the NADPH-dependent reduction of L-glutamate 5-phosphate into L-glutamate 5-semialdehyde and phosphate. The product spontaneously undergoes cyclization to form 1-pyrroline-5-carboxylate. This is Gamma-glutamyl phosphate reductase from Agathobacter rectalis (strain ATCC 33656 / DSM 3377 / JCM 17463 / KCTC 5835 / VPI 0990) (Eubacterium rectale).